Reading from the N-terminus, the 170-residue chain is Lipoprotein signal peptidase (170 aa).

3 helical membrane passes run valine 5–glycine 25, tryptophan 70–valine 90, and alanine 98–histidine 118. Residues aspartate 123 and aspartate 141 contribute to the active site. A helical membrane pass occupies residues phenylalanine 137–isoleucine 157.

The protein belongs to the peptidase A8 family.

The protein resides in the cell inner membrane. The catalysed reaction is Release of signal peptides from bacterial membrane prolipoproteins. Hydrolyzes -Xaa-Yaa-Zaa-|-(S,diacylglyceryl)Cys-, in which Xaa is hydrophobic (preferably Leu), and Yaa (Ala or Ser) and Zaa (Gly or Ala) have small, neutral side chains.. It functions in the pathway protein modification; lipoprotein biosynthesis (signal peptide cleavage). In terms of biological role, this protein specifically catalyzes the removal of signal peptides from prolipoproteins. This is Lipoprotein signal peptidase from Cellvibrio japonicus (strain Ueda107) (Pseudomonas fluorescens subsp. cellulosa).